A 227-amino-acid chain; its full sequence is uncharacterized protein (227 aa).

5 helical membrane passes run 27 to 47 (AVLP…FPLL), 63 to 83 (PAPP…AVLG), 126 to 146 (TIIL…IAGV), 153 to 173 (VFLG…TLAG), and 186 to 206 (FQLI…VSAA).

It belongs to the DedA family.

Its subcellular location is the cell membrane. This is an uncharacterized protein from Mycobacterium tuberculosis (strain CDC 1551 / Oshkosh).